Consider the following 223-residue polypeptide: UPF0441 protein YgiB (223 aa).

Positions 178–195 (TVPKTAMAPKPATTTTVT) are enriched in low complexity. Residues 178–223 (TVPKTAMAPKPATTTTVTRGGFGESVAKQSTMQRSAAGTSTRSMGG) are disordered. Residues 204–223 (AKQSTMQRSAAGTSTRSMGG) show a composition bias toward polar residues.

The protein belongs to the UPF0441 family.

The polypeptide is UPF0441 protein YgiB (Salmonella heidelberg (strain SL476)).